A 408-amino-acid chain; its full sequence is Menaquinone reductase (408 aa).

FAD-binding positions include glycine 13–alanine 17, cysteine 46–glycine 49, arginine 103, alanine 127, aspartate 290, and glycine 302–isoleucine 303.

The protein belongs to the geranylgeranyl reductase family. FAD is required as a cofactor.

It carries out the reaction menaquinone-9 + AH2 = beta-dihydromenaquinone-9 + A. It participates in quinol/quinone metabolism; menaquinone biosynthesis. In terms of biological role, catalyzes the reduction of a single double bond in the isoprenoid tail of menaquinone (MK-9) in M.tuberculosis, likely the beta-isoprene unit, forming the predominant form of menaquinone found in mycobacteria, MK-9(II-H2). This Mycobacterium tuberculosis (strain CDC 1551 / Oshkosh) protein is Menaquinone reductase.